An 89-amino-acid polypeptide reads, in one-letter code: NADH-ubiquinone oxidoreductase chain 4L (89 aa).

Transmembrane regions (helical) follow at residues 1–21 (MNFSIFLFLIGILGFVLNRKN), 22–42 (IILMLISIEIMLLAITFLILI), and 55–75 (FAIYIITIAGAESAIGLGILV).

This sequence belongs to the complex I subunit 4L family.

The protein resides in the mitochondrion membrane. The enzyme catalyses a ubiquinone + NADH + 5 H(+)(in) = a ubiquinol + NAD(+) + 4 H(+)(out). In terms of biological role, core subunit of the mitochondrial membrane respiratory chain NADH dehydrogenase (Complex I) that is believed to belong to the minimal assembly required for catalysis. Complex I functions in the transfer of electrons from NADH to the respiratory chain. The immediate electron acceptor for the enzyme is believed to be ubiquinone. The protein is NADH-ubiquinone oxidoreductase chain 4L (nd4L) of Talaromyces marneffei (Penicillium marneffei).